Consider the following 493-residue polypeptide: Lysine--tRNA ligase (493 aa).

2 residues coordinate Mg(2+): E400 and E407.

Belongs to the class-II aminoacyl-tRNA synthetase family. As to quaternary structure, homodimer. It depends on Mg(2+) as a cofactor.

It is found in the cytoplasm. The catalysed reaction is tRNA(Lys) + L-lysine + ATP = L-lysyl-tRNA(Lys) + AMP + diphosphate. In Syntrophomonas wolfei subsp. wolfei (strain DSM 2245B / Goettingen), this protein is Lysine--tRNA ligase.